The chain runs to 101 residues: MITLGHMLALGAVLFAISLAGIFLNRKNVIVLLMSIELMLLSVNINFVGFSRQLGDPSGQLFVFFILTVAAAEAAIGLAILVTLFRTRRTINVGEVDSLKG.

Helical transmembrane passes span 4–24, 30–50, and 62–82; these read LGHMLALGAVLFAISLAGIFL, IVLLMSIELMLLSVNINFVGF, and FVFFILTVAAAEAAIGLAILV.

The protein belongs to the complex I subunit 4L family. As to quaternary structure, NDH-1 is composed of 14 different subunits. Subunits NuoA, H, J, K, L, M, N constitute the membrane sector of the complex.

The protein localises to the cell inner membrane. It catalyses the reaction a quinone + NADH + 5 H(+)(in) = a quinol + NAD(+) + 4 H(+)(out). Its function is as follows. NDH-1 shuttles electrons from NADH, via FMN and iron-sulfur (Fe-S) centers, to quinones in the respiratory chain. The immediate electron acceptor for the enzyme in this species is believed to be ubiquinone. Couples the redox reaction to proton translocation (for every two electrons transferred, four hydrogen ions are translocated across the cytoplasmic membrane), and thus conserves the redox energy in a proton gradient. This chain is NADH-quinone oxidoreductase subunit K, found in Stenotrophomonas maltophilia (strain K279a).